We begin with the raw amino-acid sequence, 459 residues long: Glycosyl hydrolase family 109 protein (459 aa).

The segment at residues 1 to 31 (MHNIHRRHFLKAAGAVTAGLITANITASTHA) is a signal peptide (tat-type signal). Residues 64-65 (ER), D86, 135-138 (WEWH), 155-156 (EV), and N184 contribute to the NAD(+) site. Residues Y213, R232, 244–247 (YPTH), and Y326 each bind substrate. Position 244 (Y244) interacts with NAD(+).

The protein belongs to the Gfo/Idh/MocA family. Glycosyl hydrolase 109 subfamily. Requires NAD(+) as cofactor. In terms of processing, predicted to be exported by the Tat system. The position of the signal peptide cleavage has not been experimentally proven.

Functionally, glycosidase. The sequence is that of Glycosyl hydrolase family 109 protein from Shewanella putrefaciens (strain CN-32 / ATCC BAA-453).